We begin with the raw amino-acid sequence, 157 residues long: Transcription inhibitor protein Gfh1 (157 aa).

Positions 1-74 (MAREVKLTKA…LEDVLSRAVI (74 aa)) form a coiled coil.

Belongs to the GreA/GreB family. In terms of assembly, interacts with RNAP.

In terms of biological role, inhibits all catalytic activities of RNA polymerase (RNAP) by partially occluding its substrate-binding site and preventing NTP binding. The sequence is that of Transcription inhibitor protein Gfh1 (gfh1) from Thermus aquaticus.